Here is a 381-residue protein sequence, read N- to C-terminus: Carbamoyl phosphate synthase small chain (381 aa).

The CPSase stretch occupies residues M1–D192. S47, G244, and G246 together coordinate L-glutamine. Positions H196–R381 constitute a Glutamine amidotransferase type-1 domain. The active-site Nucleophile is C272. The L-glutamine site is built by L273, Q276, N314, G316, and F317. Active-site residues include H356 and E358.

The protein belongs to the CarA family. In terms of assembly, composed of two chains; the small (or glutamine) chain promotes the hydrolysis of glutamine to ammonia, which is used by the large (or ammonia) chain to synthesize carbamoyl phosphate. Tetramer of heterodimers (alpha,beta)4.

It catalyses the reaction hydrogencarbonate + L-glutamine + 2 ATP + H2O = carbamoyl phosphate + L-glutamate + 2 ADP + phosphate + 2 H(+). It carries out the reaction L-glutamine + H2O = L-glutamate + NH4(+). It functions in the pathway amino-acid biosynthesis; L-arginine biosynthesis; carbamoyl phosphate from bicarbonate: step 1/1. Its pathway is pyrimidine metabolism; UMP biosynthesis via de novo pathway; (S)-dihydroorotate from bicarbonate: step 1/3. Functionally, small subunit of the glutamine-dependent carbamoyl phosphate synthetase (CPSase). CPSase catalyzes the formation of carbamoyl phosphate from the ammonia moiety of glutamine, carbonate, and phosphate donated by ATP, constituting the first step of 2 biosynthetic pathways, one leading to arginine and/or urea and the other to pyrimidine nucleotides. The small subunit (glutamine amidotransferase) binds and cleaves glutamine to supply the large subunit with the substrate ammonia. This chain is Carbamoyl phosphate synthase small chain, found in Halomonas eurihalina.